The sequence spans 331 residues: Mitochondrial carrier protein CoAc1 (331 aa).

A run of 6 helical transmembrane segments spans residues 16-36 (LVDT…AGAI), 79-99 (FYKG…LHYM), 123-143 (LVAG…LDLA), 193-213 (GIGP…YIYE), 231-251 (LPCG…LDVV), and 292-312 (FAGL…GFTV). 3 Solcar repeats span residues 21-107 (PVLA…YRDW), 117-218 (SGPI…LKRH), and 225-319 (NSVR…MKSW).

Belongs to the mitochondrial carrier (TC 2.A.29) family. Expressed throughout the plant.

It localises to the mitochondrion inner membrane. Its function is as follows. Required for the accumulation of coenzyme A in the mitochondrial matrix. In Arabidopsis thaliana (Mouse-ear cress), this protein is Mitochondrial carrier protein CoAc1.